Consider the following 332-residue polypeptide: Probable thc operon regulatory protein (332 aa).

The region spanning 227–328 (RLAVDYLEAH…GVSPSEDLRT (102 aa)) is the HTH araC/xylS-type domain. 2 consecutive DNA-binding regions (H-T-H motif) follow at residues 244–265 (AQVA…QNSL) and 295–318 (VTEI…KQTF).

In terms of biological role, probably involved in the positive regulation of the thc operon for the degradation of the thiocarbamate herbicide EPTC. The protein is Probable thc operon regulatory protein (thcR) of Rhodococcus erythropolis (Arthrobacter picolinophilus).